Reading from the N-terminus, the 492-residue chain is Aspartyl/glutamyl-tRNA(Asn/Gln) amidotransferase subunit B (492 aa).

It belongs to the GatB/GatE family. GatB subfamily. In terms of assembly, heterotrimer of A, B and C subunits.

It catalyses the reaction L-glutamyl-tRNA(Gln) + L-glutamine + ATP + H2O = L-glutaminyl-tRNA(Gln) + L-glutamate + ADP + phosphate + H(+). It carries out the reaction L-aspartyl-tRNA(Asn) + L-glutamine + ATP + H2O = L-asparaginyl-tRNA(Asn) + L-glutamate + ADP + phosphate + 2 H(+). Its function is as follows. Allows the formation of correctly charged Asn-tRNA(Asn) or Gln-tRNA(Gln) through the transamidation of misacylated Asp-tRNA(Asn) or Glu-tRNA(Gln) in organisms which lack either or both of asparaginyl-tRNA or glutaminyl-tRNA synthetases. The reaction takes place in the presence of glutamine and ATP through an activated phospho-Asp-tRNA(Asn) or phospho-Glu-tRNA(Gln). The sequence is that of Aspartyl/glutamyl-tRNA(Asn/Gln) amidotransferase subunit B from Prochlorococcus marinus (strain SARG / CCMP1375 / SS120).